The sequence spans 203 residues: Urease accessory protein UreG (203 aa).

G14–T21 contacts GTP.

This sequence belongs to the SIMIBI class G3E GTPase family. UreG subfamily. As to quaternary structure, homodimer. UreD, UreF and UreG form a complex that acts as a GTP-hydrolysis-dependent molecular chaperone, activating the urease apoprotein by helping to assemble the nickel containing metallocenter of UreC. The UreE protein probably delivers the nickel.

It localises to the cytoplasm. Its function is as follows. Facilitates the functional incorporation of the urease nickel metallocenter. This process requires GTP hydrolysis, probably effectuated by UreG. In Rhizobium johnstonii (strain DSM 114642 / LMG 32736 / 3841) (Rhizobium leguminosarum bv. viciae), this protein is Urease accessory protein UreG.